Consider the following 883-residue polypeptide: Probable ribonuclease ZC3H12C (883 aa).

Disordered regions lie at residues 53-109 (QLSP…ISVE) and 139-158 (DFKP…PPDV). S230 bears the Phosphoserine mark. The RNase NYN domain occupies 245–400 (LRPIVIDGSN…LGRHGPSLDN (156 aa)). Residues 410-435 (EHKKQPCPYGKKCTYGHKCKYYHPER) form a C3H1-type zinc finger. Disordered stretches follow at residues 456–551 (AKTA…FPPQ), 680–738 (FHDP…KAPH), and 754–775 (SRLY…EGLG). Polar residues predominate over residues 466–477 (KSNSVPCSTKAD). The segment covering 503 to 515 (LEEKLPTKNKLET) has biased composition (basic and acidic residues). Polar residues predominate over residues 517 to 542 (SVPSLVSIPATSTAKPQSTTSLSNGL). Residues 705–714 (HLALHLPHSA) are compositionally biased toward low complexity.

This sequence belongs to the ZC3H12 family. It depends on Mg(2+) as a cofactor.

May function as RNase and regulate the levels of target RNA species. The chain is Probable ribonuclease ZC3H12C (ZC3H12C) from Homo sapiens (Human).